Reading from the N-terminus, the 383-residue chain is Cytochrome b (383 aa).

The next 4 helical transmembrane spans lie at 32–52 (VGSL…FLAM), 76–98 (WLMR…LHMG), 113–133 (VWSM…MGYC), and 179–199 (FFAL…MHFM). His-82 and His-96 together coordinate heme b. Heme b contacts are provided by His-183 and His-197. An a ubiquinone-binding site is contributed by His-202. A run of 4 helical transmembrane segments spans residues 225–245 (FVFK…LFVF), 289–309 (LGGV…PMTD), 321–341 (LSKL…NMGQ), and 348–368 (FIEL…MLVP).

This sequence belongs to the cytochrome b family. Fungal cytochrome b-c1 complex contains 10 subunits; 3 respiratory subunits, 2 core proteins and 5 low-molecular weight proteins. Cytochrome b-c1 complex is a homodimer. The cofactor is heme b.

It is found in the mitochondrion inner membrane. In terms of biological role, component of the ubiquinol-cytochrome c reductase complex (complex III or cytochrome b-c1 complex) that is part of the mitochondrial respiratory chain. The b-c1 complex mediates electron transfer from ubiquinol to cytochrome c. Contributes to the generation of a proton gradient across the mitochondrial membrane that is then used for ATP synthesis. This chain is Cytochrome b (COB), found in Debaryomyces hansenii (strain ATCC 36239 / CBS 767 / BCRC 21394 / JCM 1990 / NBRC 0083 / IGC 2968) (Yeast).